Consider the following 320-residue polypeptide: Malate dehydrogenase 2 (320 aa).

NAD(+) is bound by residues 10–15 (GAGQIG) and Asp34. Arg83 and Arg89 together coordinate substrate. NAD(+)-binding positions include Asn96 and 119-121 (ITN). Residues Asn121 and Arg152 each contribute to the substrate site. His176 acts as the Proton acceptor in catalysis.

Belongs to the LDH/MDH superfamily. MDH type 3 family.

It catalyses the reaction (S)-malate + NAD(+) = oxaloacetate + NADH + H(+). Its function is as follows. Catalyzes the reversible oxidation of malate to oxaloacetate. This chain is Malate dehydrogenase 2, found in Rhodopseudomonas palustris (strain BisB18).